Reading from the N-terminus, the 297-residue chain is Pyridoxal 5'-phosphate synthase subunit PdxS (297 aa).

Asp-27 lines the D-ribose 5-phosphate pocket. Lys-84 functions as the Schiff-base intermediate with D-ribose 5-phosphate in the catalytic mechanism. Position 156 (Gly-156) interacts with D-ribose 5-phosphate. Residue Arg-168 coordinates D-glyceraldehyde 3-phosphate. D-ribose 5-phosphate-binding positions include Gly-217 and Gly-238–Ser-239.

The protein belongs to the PdxS/SNZ family. As to quaternary structure, in the presence of PdxT, forms a dodecamer of heterodimers.

It carries out the reaction aldehydo-D-ribose 5-phosphate + D-glyceraldehyde 3-phosphate + L-glutamine = pyridoxal 5'-phosphate + L-glutamate + phosphate + 3 H2O + H(+). The protein operates within cofactor biosynthesis; pyridoxal 5'-phosphate biosynthesis. Catalyzes the formation of pyridoxal 5'-phosphate from ribose 5-phosphate (RBP), glyceraldehyde 3-phosphate (G3P) and ammonia. The ammonia is provided by the PdxT subunit. Can also use ribulose 5-phosphate and dihydroxyacetone phosphate as substrates, resulting from enzyme-catalyzed isomerization of RBP and G3P, respectively. This is Pyridoxal 5'-phosphate synthase subunit PdxS from Corynebacterium efficiens (strain DSM 44549 / YS-314 / AJ 12310 / JCM 11189 / NBRC 100395).